The sequence spans 436 residues: Cyclin-dependent kinase 11B (436 aa).

Positions 25 to 30 match the Nuclear localization signal motif; that stretch reads VKKNRK. Residues 30–44 form a calmodulin-binding region; sequence KKLVKGLHRAGPPPE. In terms of domain architecture, Protein kinase spans 79–364; that stretch reads FQCLNRIEEG…AEDGLKHEYF (286 aa). ATP contacts are provided by residues 85-93 and lysine 108; that span reads IEEGTYGVV. Position 123 is a phosphoserine; by CDK7 (serine 123). A Phosphothreonine; by CDK7 modification is found at threonine 129. Aspartate 203 acts as the Proton acceptor in catalysis. Serine 230 is modified (phosphoserine). Tyrosine 235 is subject to Phosphotyrosine. Threonine 236 is modified (phosphothreonine). Lysine 282 is covalently cross-linked (Glycyl lysine isopeptide (Lys-Gly) (interchain with G-Cter in SUMO2)). A disordered region spans residues 383–406; sequence SEQQCVKRGTSPKPPEGGLGYSQL. At threonine 392 the chain carries Phosphothreonine. At serine 393 the chain carries Phosphoserine.

Belongs to the protein kinase superfamily. CMGC Ser/Thr protein kinase family. CDC2/CDKX subfamily. May interact PAK1 and RANBP9. p110C interacts with RNPS1. Interacts with CCND3. Interacts with CCNL1 and CCNL2. Forms complexes with pre-mRNA-splicing factors, including at least SRSF1, SRSF2 AND SRSF7/SLU7. The cofactor is Mg(2+).

It is found in the cytoplasm. The protein resides in the nucleus membrane. It localises to the endomembrane system. Its subcellular location is the perinuclear region. The enzyme catalyses L-seryl-[protein] + ATP = O-phospho-L-seryl-[protein] + ADP + H(+). The catalysed reaction is L-threonyl-[protein] + ATP = O-phospho-L-threonyl-[protein] + ADP + H(+). Functionally, plays multiple roles in cell cycle progression, cytokinesis and apoptosis. Involved in pre-mRNA splicing in a kinase activity-dependent manner. May act as a negative regulator of normal cell cycle progression. This chain is Cyclin-dependent kinase 11B (Cdk11b), found in Rattus norvegicus (Rat).